Here is a 215-residue protein sequence, read N- to C-terminus: 3,4-dihydroxy-2-butanone 4-phosphate synthase (215 aa).

D-ribulose 5-phosphate is bound by residues 38–39 (RE), Asp43, 151–155 (RRGHT), and Glu175. Glu39 contacts Mg(2+). Mg(2+) is bound at residue His154.

This sequence belongs to the DHBP synthase family. In terms of assembly, homodimer. Mg(2+) serves as cofactor. The cofactor is Mn(2+).

The catalysed reaction is D-ribulose 5-phosphate = (2S)-2-hydroxy-3-oxobutyl phosphate + formate + H(+). The protein operates within cofactor biosynthesis; riboflavin biosynthesis; 2-hydroxy-3-oxobutyl phosphate from D-ribulose 5-phosphate: step 1/1. Catalyzes the conversion of D-ribulose 5-phosphate to formate and 3,4-dihydroxy-2-butanone 4-phosphate. The polypeptide is 3,4-dihydroxy-2-butanone 4-phosphate synthase (Haemophilus influenzae (strain 86-028NP)).